We begin with the raw amino-acid sequence, 101 residues long: MMLEHVLVLSAYLFSVGLYGLITSRNMVRALMCLELILNAVNINFVTFSDFFDSRQLKGSIFSIFVIAIAAAEAAIGLAIVSSIYRNRKSTRINQSNLLNK.

A run of 3 helical transmembrane segments spans residues Met-2–Ile-22, Met-32–Phe-52, and Ile-61–Val-81.

This sequence belongs to the complex I subunit 4L family. As to quaternary structure, NDH is composed of at least 16 different subunits, 5 of which are encoded in the nucleus.

Its subcellular location is the plastid. It localises to the chloroplast thylakoid membrane. It catalyses the reaction a plastoquinone + NADH + (n+1) H(+)(in) = a plastoquinol + NAD(+) + n H(+)(out). The catalysed reaction is a plastoquinone + NADPH + (n+1) H(+)(in) = a plastoquinol + NADP(+) + n H(+)(out). NDH shuttles electrons from NAD(P)H:plastoquinone, via FMN and iron-sulfur (Fe-S) centers, to quinones in the photosynthetic chain and possibly in a chloroplast respiratory chain. The immediate electron acceptor for the enzyme in this species is believed to be plastoquinone. Couples the redox reaction to proton translocation, and thus conserves the redox energy in a proton gradient. In Daucus carota (Wild carrot), this protein is NAD(P)H-quinone oxidoreductase subunit 4L, chloroplastic.